A 259-amino-acid polypeptide reads, in one-letter code: Type III pantothenate kinase (259 aa).

Residue 6 to 13 (DAGNTNIV) participates in ATP binding. Substrate-binding positions include Y100 and 107–110 (GADR). The Proton acceptor role is filled by D109. D129 serves as a coordination point for K(+). Position 132 (T132) interacts with ATP. Substrate is bound at residue T184.

The protein belongs to the type III pantothenate kinase family. In terms of assembly, homodimer. It depends on NH4(+) as a cofactor. K(+) is required as a cofactor.

It is found in the cytoplasm. It carries out the reaction (R)-pantothenate + ATP = (R)-4'-phosphopantothenate + ADP + H(+). Its pathway is cofactor biosynthesis; coenzyme A biosynthesis; CoA from (R)-pantothenate: step 1/5. In terms of biological role, catalyzes the phosphorylation of pantothenate (Pan), the first step in CoA biosynthesis. The protein is Type III pantothenate kinase of Clostridium novyi (strain NT).